The primary structure comprises 134 residues: D-ribose pyranase (134 aa).

The active-site Proton donor is H20. Residues D28, H101, and 123–125 (YSN) each bind substrate.

It belongs to the RbsD / FucU family. RbsD subfamily. In terms of assembly, homodecamer.

The protein resides in the cytoplasm. The catalysed reaction is beta-D-ribopyranose = beta-D-ribofuranose. It functions in the pathway carbohydrate metabolism; D-ribose degradation; D-ribose 5-phosphate from beta-D-ribopyranose: step 1/2. Catalyzes the interconversion of beta-pyran and beta-furan forms of D-ribose. This chain is D-ribose pyranase, found in Pseudomonas syringae pv. tomato (strain ATCC BAA-871 / DC3000).